The following is a 158-amino-acid chain: MQKIPLTVRGAELLKQELQQLKSVARPEVIEAIAEARSHGDLSENAEYEAAKERQGFIEGRISELEHKLSVAHIINPTEIHAEGKIVFGTTVTLEDLETEEHVTYQIVGEDEADIKQGKIYVGSPIARALIGKEEGDTAEVQAPGGVREYDIIEVRYI.

The stretch at 46–66 forms a coiled coil; the sequence is AEYEAAKERQGFIEGRISELE.

This sequence belongs to the GreA/GreB family.

Its function is as follows. Necessary for efficient RNA polymerase transcription elongation past template-encoded arresting sites. The arresting sites in DNA have the property of trapping a certain fraction of elongating RNA polymerases that pass through, resulting in locked ternary complexes. Cleavage of the nascent transcript by cleavage factors such as GreA or GreB allows the resumption of elongation from the new 3'terminus. GreA releases sequences of 2 to 3 nucleotides. This chain is Transcription elongation factor GreA, found in Neisseria meningitidis serogroup A / serotype 4A (strain DSM 15465 / Z2491).